The primary structure comprises 169 residues: Phosphopantetheine adenylyltransferase (169 aa).

Ser10 provides a ligand contact to substrate. ATP is bound by residues Ser10 to Phe11 and His18. Substrate-binding residues include Lys42, Thr79, and Arg93. Residues Gly94–Arg96, Glu104, and Val129–Thr135 each bind ATP.

The protein belongs to the bacterial CoaD family. Homohexamer. Requires Mg(2+) as cofactor.

It is found in the cytoplasm. The catalysed reaction is (R)-4'-phosphopantetheine + ATP + H(+) = 3'-dephospho-CoA + diphosphate. The protein operates within cofactor biosynthesis; coenzyme A biosynthesis; CoA from (R)-pantothenate: step 4/5. In terms of biological role, reversibly transfers an adenylyl group from ATP to 4'-phosphopantetheine, yielding dephospho-CoA (dPCoA) and pyrophosphate. The polypeptide is Phosphopantetheine adenylyltransferase (Rhodopseudomonas palustris (strain ATCC BAA-98 / CGA009)).